A 175-amino-acid chain; its full sequence is Heme-dependent oxidative N-demethylase delta subunit (175 aa).

As to quaternary structure, the heme-dependent oxidative N-demethylase (HODM) is a heterotetramer composed of a catalytic alpha subunit, a FMN/2Fe-2S-dependent oxidoreductase beta subunit, a gamma subunit with putative aminotransferase activity, and a delta subunit of unknown function.

In terms of biological role, component of the heme-dependent oxidative N-demethylase (HODM) enzyme, that catalyzes the NADPH-dependent oxidation of dimethylamine (DMA) to methylamine (MA) and formaldehyde. Functions in bacterial methylated amine catabolism, linking alkylamine oxidation to the tetrahydrofolate C1 pool. The function of the delta subunit is unknown. This chain is Heme-dependent oxidative N-demethylase delta subunit, found in Ectopseudomonas mendocina (strain ymp) (Pseudomonas mendocina).